Consider the following 90-residue polypeptide: Protein S100-A6 (90 aa).

2 consecutive EF-hand domains span residues 12–47 (LVAI…IGSK) and 48–83 (LQDA…LALI). Ca(2+) is bound by residues T28 and E33. K40 is modified (N6-acetyllysine). S46 bears the Phosphoserine mark. K47 carries the post-translational modification N6-acetyllysine; alternate. K47 bears the N6-succinyllysine; alternate mark. Ca(2+) contacts are provided by D61, N63, D65, E67, and E72.

It belongs to the S-100 family. Homodimer; head to tail assembly of 2 subunits. Interacts with CACYBP in a calcium-dependent manner. Interacts with ANXA2 and ANXA11 (via N-terminus). Interacts with SUGT1. Interacts with TP53; has higher affinity for TP53 that is phosphorylated on its N-terminal domain, and lower affinity for TP53 that is phosphorylated on its C-terminal domain. Interacts with tropomyosin. Interacts with FKBP4. Interacts with PPP5C (via TPR repeats); the interaction is calcium-dependent and modulates PPP5C activity. Interacts with TPPP; this interaction inhibits TPPP dimerization. Post-translationally, the N-terminus is blocked.

Its subcellular location is the nucleus envelope. It is found in the cytoplasm. The protein resides in the cell membrane. Functionally, may function as calcium sensor and modulator, contributing to cellular calcium signaling. May function by interacting with other proteins, such as TPR-containing proteins, and indirectly play a role in many physiological processes such as the reorganization of the actin cytoskeleton and in cell motility. Binds 2 calcium ions. Calcium binding is cooperative. This Homo sapiens (Human) protein is Protein S100-A6 (S100A6).